A 159-amino-acid chain; its full sequence is ATP synthase subunit b (159 aa).

A helical transmembrane segment spans residues 8-28; the sequence is ILATIINFIILILILKHFFWD.

This sequence belongs to the ATPase B chain family. F-type ATPases have 2 components, F(1) - the catalytic core - and F(0) - the membrane proton channel. F(1) has five subunits: alpha(3), beta(3), gamma(1), delta(1), epsilon(1). F(0) has three main subunits: a(1), b(2) and c(10-14). The alpha and beta chains form an alternating ring which encloses part of the gamma chain. F(1) is attached to F(0) by a central stalk formed by the gamma and epsilon chains, while a peripheral stalk is formed by the delta and b chains.

It is found in the cell membrane. Functionally, f(1)F(0) ATP synthase produces ATP from ADP in the presence of a proton or sodium gradient. F-type ATPases consist of two structural domains, F(1) containing the extramembraneous catalytic core and F(0) containing the membrane proton channel, linked together by a central stalk and a peripheral stalk. During catalysis, ATP synthesis in the catalytic domain of F(1) is coupled via a rotary mechanism of the central stalk subunits to proton translocation. In terms of biological role, component of the F(0) channel, it forms part of the peripheral stalk, linking F(1) to F(0). The polypeptide is ATP synthase subunit b (Clostridium perfringens (strain ATCC 13124 / DSM 756 / JCM 1290 / NCIMB 6125 / NCTC 8237 / Type A)).